The sequence spans 63 residues: Beta-glucosidase A-3 (63 aa).

The active site involves D12. N48 and N56 each carry an N-linked (GlcNAc...) asparagine glycan.

This sequence belongs to the glycosyl hydrolase 3 family.

The enzyme catalyses Hydrolysis of terminal, non-reducing beta-D-glucosyl residues with release of beta-D-glucose.. It functions in the pathway glycan metabolism; cellulose degradation. This chain is Beta-glucosidase A-3, found in Aspergillus wentii.